Reading from the N-terminus, the 134-residue chain is Small ribosomal subunit protein uS9 (134 aa).

The disordered stretch occupies residues 109–134; that stretch reads KGDPRRKEPKKFGGRGARARRQKSYR. Basic residues predominate over residues 115–134; sequence KEPKKFGGRGARARRQKSYR.

The protein belongs to the universal ribosomal protein uS9 family.

In Methanopyrus kandleri (strain AV19 / DSM 6324 / JCM 9639 / NBRC 100938), this protein is Small ribosomal subunit protein uS9.